The chain runs to 344 residues: MHNKNNTILQTIKGEKTSHTPVWFMRQAGRSQPEYRKLKEKYSLFDITHQPELCAYVTQLPVDNYNTDAAVLYKDIMTPLKPIGVDVDIKSGIGPVISNPIKSVSDVDKLTQIDPKRDVPYVLETIQLLTQEKLNVPLIGFTGAPFTLASYMIEGGPSKNYNYTKAMMYGDEATWFALMNHLVQVSIDYVVAQVEAGAELIQIFDSWVGALNVQDYRYYIKPSMDKLINGIKAKYDVPVIMFGVGASHLINEWNDLAIDVLGLDWRTSISSATKMGVNKTLQGNLDPSLLLAPWDVIEQRVREILDEGMERGKHIFNLGHGVFPEVQPDTLKRVTQFVHDYTSK.

Substrate contacts are provided by residues 26–30 (RQAGR), Phe45, Asp75, Tyr151, Ser206, and His320.

It belongs to the uroporphyrinogen decarboxylase family. As to quaternary structure, homodimer.

Its subcellular location is the cytoplasm. The catalysed reaction is uroporphyrinogen III + 4 H(+) = coproporphyrinogen III + 4 CO2. It participates in porphyrin-containing compound metabolism; protoporphyrin-IX biosynthesis; coproporphyrinogen-III from 5-aminolevulinate: step 4/4. In terms of biological role, catalyzes the decarboxylation of four acetate groups of uroporphyrinogen-III to yield coproporphyrinogen-III. The chain is Uroporphyrinogen decarboxylase from Staphylococcus haemolyticus (strain JCSC1435).